We begin with the raw amino-acid sequence, 96 residues long: Cystatin (96 aa).

The region spanning 22 to 65 (DFIKAALNETGTHAGRKYKVLRSSQQVVAGMKYTFYIVFEDDES) is the Cystatin domain. N-linked (GlcNAc...) asparagine glycosylation is present at N29.

This sequence belongs to the cystatin family. Interacts with cathepsin L-like peptidase; the interaction results in inhibition of cathepsin L-like peptidase activity. In terms of tissue distribution, salivary gland. Midgut.

Its function is as follows. Cysteine proteinase inhibitor. Inhibits cathepsin L-like peptidase. Increases cell viability following apoptosis induction by staurosporine. Inhibits human cathepsin S (CTSS), human cathepsin L2 (CTSV), human cathepsin L (CTSL), human cathepsin B (CTSB) and papain. Functionally, (Microbial infection) Modulates dengue virus type 2 replication in salivary glands. This chain is Cystatin, found in Aedes aegypti (Yellowfever mosquito).